Here is a 603-residue protein sequence, read N- to C-terminus: Replication protein A 70 kDa DNA-binding subunit (603 aa).

Residues 131 to 152 (PKPAVTSNSKPIAKKEPSHNNN) form a disordered region. Serine 160 carries the phosphoserine modification. The segment at residues 179-252 (WVIKARVTSK…QLKPANKQYS (74 aa)) is a DNA-binding region (OB). Serine 420 carries the post-translational modification Phosphoserine. The segment at 464–486 (CPQSDCNKKVVDEGNDQFRCEKC) adopts a C4-type zinc-finger fold.

It belongs to the replication factor A protein 1 family. Component of the heterotrimeric canonical replication protein A complex (RPA).

It localises to the nucleus. Functionally, as part of the heterotrimeric replication protein A complex (RPA/RP-A), binds and stabilizes single-stranded DNA intermediates, that form during DNA replication or upon DNA stress. It prevents their reannealing and in parallel, recruits and activates different proteins and complexes involved in DNA metabolism. Thereby, it plays an essential role both in DNA replication and the cellular response to DNA damage. This Drosophila melanogaster (Fruit fly) protein is Replication protein A 70 kDa DNA-binding subunit.